The following is a 184-amino-acid chain: FMRFamide-like neuropeptides 3 (184 aa).

Residues 1-23 (MISPNHLILLFCVNCAFLVASDA) form the signal peptide. A propeptide spanning residues 24 to 25 (TP) is cleaved from the precursor. Phenylalanine amide is present on F35. Residues 39-73 (AIADEMTFEEDGYYPSNVMWKRSTVDSSEPVIRDQ) constitute a propeptide that is removed on maturation. Phenylalanine amide is present on residues F82, F95, F111, and F126. The disordered stretch occupies residues 90–110 (FGTMRFGKRNPENDTPFGTMR). The propeptide occupies 130–142 (EDGNAPFGTMKFG). The interval 150 to 184 (LGTMRFGKRSADDSAPFGTMRFGKRNPLGTMRFGK) is disordered. Residues F155, F171, and F182 each carry the phenylalanine amide modification.

It belongs to the FARP (FMRFamide related peptide) family. Each flp gene is expressed in a distinct set of neurons. Flp-3 is expressed in the IL1 and PQR neurons.

The protein localises to the secreted. FMRFamides and FMRFamide-like peptides are neuropeptides. SAEPFGTMRF-amide inhibits the activity of dissected pharyngeal myogenic muscle system. This chain is FMRFamide-like neuropeptides 3, found in Caenorhabditis elegans.